A 428-amino-acid chain; its full sequence is Flotillin-2a (428 aa).

S-palmitoyl cysteine attachment occurs at residues Cys-4, Cys-19, and Cys-20.

Belongs to the band 7/mec-2 family. Flotillin subfamily. Heterooligomer; Heterooligomerizes with ic complex of flotillins 1 and 2. In terms of processing, palmitoylation may be required for the formation of higher order complexes and for neurite outgrowth in cultured neural stem cells.

It is found in the membrane. It localises to the endosome. May play a role in axon growth and regeneration. May be involved in epidermal cell adhesion and epidermal structure and function. The polypeptide is Flotillin-2a (flot2a) (Danio rerio (Zebrafish)).